Reading from the N-terminus, the 205-residue chain is Large ribosomal subunit protein uL3c (205 aa).

Positions 127 to 153 are disordered; that stretch reads HFSRGPMSHGSKNHRQPGSIGAGTTPG.

Belongs to the universal ribosomal protein uL3 family. Part of the 50S ribosomal subunit.

The protein localises to the plastid. The protein resides in the chloroplast. Functionally, one of the primary rRNA binding proteins, it binds directly near the 3'-end of the 23S rRNA, where it nucleates assembly of the 50S subunit. In Porphyra purpurea (Red seaweed), this protein is Large ribosomal subunit protein uL3c (rpl3).